Here is an 842-residue protein sequence, read N- to C-terminus: Elongation factor 2 (842 aa).

Residues 17-253 (SNVRNMSVIA…LWGENYFNPK (237 aa)) form the tr-type G domain. GTP contacts are provided by residues 26 to 33 (AHVDHGKS), 104 to 108 (DSPGH), and 158 to 161 (NKVD). Serine 568 is subject to Phosphoserine. Threonine 574 carries the phosphothreonine modification. A Diphthamide modification is found at histidine 699.

The protein belongs to the TRAFAC class translation factor GTPase superfamily. Classic translation factor GTPase family. EF-G/EF-2 subfamily.

The protein resides in the cytoplasm. Its function is as follows. Catalyzes the GTP-dependent ribosomal translocation step during translation elongation. During this step, the ribosome changes from the pre-translocational (PRE) to the post-translocational (POST) state as the newly formed A-site-bound peptidyl-tRNA and P-site-bound deacylated tRNA move to the P and E sites, respectively. Catalyzes the coordinated movement of the two tRNA molecules, the mRNA and conformational changes in the ribosome. This is Elongation factor 2 (eft201) from Schizosaccharomyces pombe (strain 972 / ATCC 24843) (Fission yeast).